Here is a 325-residue protein sequence, read N- to C-terminus: uncharacterized protein (325 aa).

Residues isoleucine 10–histidine 30 traverse the membrane as a helical segment. The AB hydrolase-1 domain maps to lysine 94–isoleucine 166.

Its subcellular location is the cell membrane. This is an uncharacterized protein from Bacillus subtilis (strain 168).